We begin with the raw amino-acid sequence, 498 residues long: L-xylulose/3-keto-L-gulonate kinase (498 aa).

This sequence belongs to the FGGY kinase family. In terms of assembly, homodimer.

It catalyses the reaction L-xylulose + ATP = L-xylulose 5-phosphate + ADP + H(+). The catalysed reaction is 3-dehydro-L-gulonate + ATP = 3-dehydro-L-gulonate 6-phosphate + ADP + H(+). Catalyzes the phosphorylation of L-xylulose and 3-keto-L-gulonate. Is involved in L-lyxose utilization via xylulose, and may also be involved in the utilization of 2,3-diketo-L-gulonate. This Escherichia coli (strain K12) protein is L-xylulose/3-keto-L-gulonate kinase (lyx).